The primary structure comprises 514 residues: Citrate synthase 2, peroxisomal (514 aa).

Catalysis depends on residues His-324, His-363, and Asp-419.

It belongs to the citrate synthase family. As to expression, widely expressed. Expressed throughout the shoot. Expressed in flower, silique, stem, cauline leaf, young leaf, mature leaf and senescent leaf.

It is found in the peroxisome. It catalyses the reaction oxaloacetate + acetyl-CoA + H2O = citrate + CoA + H(+). Its pathway is carbohydrate metabolism; tricarboxylic acid cycle; isocitrate from oxaloacetate: step 1/2. Peroxisomal citrate synthase required for the fatty acid respiration in seedlings, citrate being exported from peroxisomes into mitochondria during respiration of triacylglycerol (TAG). Indeed, complete respiration requires the transfer of carbon in the form of citrate from the peroxisome to the mitochondria. This chain is Citrate synthase 2, peroxisomal (CSY2), found in Arabidopsis thaliana (Mouse-ear cress).